Here is a 190-residue protein sequence, read N- to C-terminus: Proline-rich protein 3 (190 aa).

3 disordered regions span residues Met1–Pro94, Pro110–Arg130, and Lys142–Pro161. Residues Met37–Met48 show a composition bias toward pro residues. The segment at Lys157–Val185 adopts a C3H1-type zinc-finger fold.

The sequence is that of Proline-rich protein 3 (Prr3) from Mus musculus (Mouse).